Here is a 199-residue protein sequence, read N- to C-terminus: dTTP/UTP pyrophosphatase (199 aa).

The Proton acceptor role is filled by Asp-79.

Belongs to the Maf family. YhdE subfamily. A divalent metal cation serves as cofactor.

The protein resides in the cytoplasm. It carries out the reaction dTTP + H2O = dTMP + diphosphate + H(+). It catalyses the reaction UTP + H2O = UMP + diphosphate + H(+). Nucleoside triphosphate pyrophosphatase that hydrolyzes dTTP and UTP. May have a dual role in cell division arrest and in preventing the incorporation of modified nucleotides into cellular nucleic acids. This Porphyromonas gingivalis (strain ATCC 33277 / DSM 20709 / CIP 103683 / JCM 12257 / NCTC 11834 / 2561) protein is dTTP/UTP pyrophosphatase.